Consider the following 61-residue polypeptide: Small ribosomal subunit protein uS14 (61 aa).

The Zn(2+) site is built by cysteine 24, cysteine 27, cysteine 40, and cysteine 43.

Belongs to the universal ribosomal protein uS14 family. Zinc-binding uS14 subfamily. As to quaternary structure, part of the 30S ribosomal subunit. Contacts proteins S3 and S10. The cofactor is Zn(2+).

Functionally, binds 16S rRNA, required for the assembly of 30S particles and may also be responsible for determining the conformation of the 16S rRNA at the A site. This is Small ribosomal subunit protein uS14 from Treponema pallidum (strain Nichols).